A 332-amino-acid chain; its full sequence is L-lactate dehydrogenase A chain (332 aa).

NAD(+) is bound by residues 29-57 and R99; that span reads GMVGMASAISILLKDLCDELALVDVMEDK. R106, N138, and R169 together coordinate substrate. N138 lines the NAD(+) pocket. H193 acts as the Proton acceptor in catalysis. A substrate-binding site is contributed by T248.

It belongs to the LDH/MDH superfamily. LDH family. As to quaternary structure, homotetramer.

Its subcellular location is the cytoplasm. The enzyme catalyses (S)-lactate + NAD(+) = pyruvate + NADH + H(+). It participates in fermentation; pyruvate fermentation to lactate; (S)-lactate from pyruvate: step 1/1. Its function is as follows. Interconverts simultaneously and stereospecifically pyruvate and lactate with concomitant interconversion of NADH and NAD(+). The sequence is that of L-lactate dehydrogenase A chain (ldha) from Gillichthys seta (Shortjaw mudsucker).